Consider the following 624-residue polypeptide: Anti-CBASS protein Acb1 (624 aa).

Tyr106 serves as a coordination point for 3',3'-cGAMP. Tyr106 contacts 3',3'-cUAMP. Catalysis depends on residues His503, Thr505, His581, and Thr583. Residue Trp617 coordinates 3',3'-cGAMP. Residue Trp617 coordinates 3',3'-cUAMP.

This sequence belongs to the anti-CBASS protein Acb1 family.

It catalyses the reaction 3',3'-cUAMP + H2O = U[3'-5']pAp[3'] + H(+). The enzyme catalyses 3',3',3'-c-tri-AMP + H2O = A[3'-5']pA[3'-5']pAp[3'] + H(+). It carries out the reaction 3',3',3'-cAAG + H2O = G[3'-5']pA[3'-5']pAp[3'] + H(+). The catalysed reaction is 3',3',3'-cAAG + H2O = A[3'-5']pG[3'-5']pAp[3'] + H(+). It catalyses the reaction 3',3'-cGAMP + H2O = G[3'-5']pAp[3'] + H(+). Functionally, counteracts or regulates the endogenous CBASS antiviral defense system. Phosphodiesterase that enables metal-independent hydrolysis of the host cyclic di- and trinucleotide CBASS signals such as 3'3'-cGAMP, 3'3'cUA, and 3'3'3'-cAAA. This chain is Anti-CBASS protein Acb1, found in Sphingomonas paeninsulae.